A 326-amino-acid chain; its full sequence is Protein FAM50 homolog (326 aa).

Residues 77–111 (ISNRDLQVARGDQSSSTQSKDSQEAREKEEHVAKH) are disordered. Basic and acidic residues predominate over residues 97–109 (DSQEAREKEEHVA).

Belongs to the FAM50 family.

The protein is Protein FAM50 homolog of Caenorhabditis elegans.